The following is a 771-amino-acid chain: Choline transporter-like protein 1 (771 aa).

The helical transmembrane segment at 96–116 (FLFFVFLCGWVVVAGFGIMWG) threads the bilayer. Residues asparagine 141 and asparagine 259 are each glycosylated (N-linked (GlcNAc...) asparagine). The next 4 membrane-spanning stretches (helical) occupy residues 312 to 332 (WWQT…WTVI), 335 to 355 (LLGS…LGFG), 392 to 412 (LVVA…ILFI), and 441 to 461 (LFPF…AIWL). Residue asparagine 480 is glycosylated (N-linked (GlcNAc...) asparagine). 5 helical membrane-spanning segments follow: residues 514-534 (LFAF…ALAG), 566-586 (LGSI…RVLL), 603-623 (WFLM…KFLT), 662-682 (AGIL…ILSF), and 701-721 (YYFV…DLFF).

Belongs to the CTL (choline transporter-like) family.

It localises to the membrane. In Caenorhabditis elegans, this protein is Choline transporter-like protein 1 (chtl-1).